A 566-amino-acid chain; its full sequence is Oxygen-dependent choline dehydrogenase (566 aa).

An FAD-binding site is contributed by 7 to 36 (DYIICGAGSAGNVLATRLTEDPDVTVLLLE). Residues 180 to 202 (NGYQQEGFGPMDRTVTPKGRRAS) are disordered. His-474 (proton acceptor) is an active-site residue.

It belongs to the GMC oxidoreductase family. It depends on FAD as a cofactor.

It catalyses the reaction choline + A = betaine aldehyde + AH2. The catalysed reaction is betaine aldehyde + NAD(+) + H2O = glycine betaine + NADH + 2 H(+). It participates in amine and polyamine biosynthesis; betaine biosynthesis via choline pathway; betaine aldehyde from choline (cytochrome c reductase route): step 1/1. Functionally, involved in the biosynthesis of the osmoprotectant glycine betaine. Catalyzes the oxidation of choline to betaine aldehyde and betaine aldehyde to glycine betaine at the same rate. The polypeptide is Oxygen-dependent choline dehydrogenase (Burkholderia orbicola (strain MC0-3)).